Consider the following 227-residue polypeptide: PKHD-type hydroxylase BPSS1206 (227 aa).

The region spanning 78 to 178 (KVFPPLFNRY…RVASFFWIQS (101 aa)) is the Fe2OG dioxygenase domain. Residues His-96, Asp-98, and His-159 each coordinate Fe cation. 2-oxoglutarate is bound at residue Arg-169.

Fe(2+) serves as cofactor. The cofactor is L-ascorbate.

In Burkholderia pseudomallei (strain K96243), this protein is PKHD-type hydroxylase BPSS1206.